A 120-amino-acid polypeptide reads, in one-letter code: Large ribosomal subunit protein uL18 (120 aa).

This sequence belongs to the universal ribosomal protein uL18 family. As to quaternary structure, part of the 50S ribosomal subunit; part of the 5S rRNA/L5/L18/L25 subcomplex. Contacts the 5S and 23S rRNAs.

Functionally, this is one of the proteins that bind and probably mediate the attachment of the 5S RNA into the large ribosomal subunit, where it forms part of the central protuberance. The polypeptide is Large ribosomal subunit protein uL18 (Chloroflexus aggregans (strain MD-66 / DSM 9485)).